The following is a 132-amino-acid chain: UPF0332 protein TM_1000 (132 aa).

This sequence belongs to the UPF0332 family.

In Thermotoga maritima (strain ATCC 43589 / DSM 3109 / JCM 10099 / NBRC 100826 / MSB8), this protein is UPF0332 protein TM_1000.